The chain runs to 158 residues: Cyclic pyranopterin monophosphate synthase (158 aa).

Substrate-binding positions include 76-78 (LCH) and 114-115 (ME). Asp129 is a catalytic residue.

The protein belongs to the MoaC family. In terms of assembly, homohexamer; trimer of dimers.

It carries out the reaction (8S)-3',8-cyclo-7,8-dihydroguanosine 5'-triphosphate = cyclic pyranopterin phosphate + diphosphate. The protein operates within cofactor biosynthesis; molybdopterin biosynthesis. In terms of biological role, catalyzes the conversion of (8S)-3',8-cyclo-7,8-dihydroguanosine 5'-triphosphate to cyclic pyranopterin monophosphate (cPMP). This Shewanella baltica (strain OS223) protein is Cyclic pyranopterin monophosphate synthase.